The chain runs to 96 residues: uncharacterized protein (96 aa).

Residues Cys-10, Cys-16, and Cys-55 each coordinate [3Fe-4S] cluster. The disordered stretch occupies residues 67 to 96; the sequence is AGDGERASADPAPSPAEAERHAAKDQHNLG. Over residues 83–96 the composition is skewed to basic and acidic residues; sequence EAERHAAKDQHNLG.

It depends on [3Fe-4S] cluster as a cofactor.

Electron transport protein for the cytochrome systems. This is an uncharacterized protein from Bradyrhizobium diazoefficiens (strain JCM 10833 / BCRC 13528 / IAM 13628 / NBRC 14792 / USDA 110).